The following is a 610-amino-acid chain: 6(G)-fructosyltransferase (610 aa).

The Cytoplasmic portion of the chain corresponds to 1-20 (MATSLQAPILGSRPPRRTLR). The chain crosses the membrane as a helical; Signal-anchor for type II membrane protein span at residues 21-38 (FLSFALFSALVLVVASFS). Topologically, residues 39–610 (SRKSESGSGL…NQYYPFTSSN (572 aa)) are vacuolar. Substrate is bound by residues 79 to 82 (YMND), glutamine 98, tryptophan 106, 141 to 142 (WT), and 207 to 208 (RD). Residue aspartate 82 is part of the active site. Asparagine 215, asparagine 229, and asparagine 248 each carry an N-linked (GlcNAc...) asparagine glycan. Glutamate 266 serves as a coordination point for substrate. N-linked (GlcNAc...) asparagine glycosylation occurs at asparagine 459. An intrachain disulfide couples cysteine 460 to cysteine 508. N-linked (GlcNAc...) asparagine glycosylation is found at asparagine 580 and asparagine 597.

The protein belongs to the glycosyl hydrolase 32 family. Might be processed in two N-terminal and C-terminal proteolytic fragments.

It is found in the vacuole membrane. It catalyses the reaction [1-beta-D-fructofuranosyl-(2-&gt;1)-]m+1 alpha-D-glucopyranoside + [1-beta-D-fructofuranosyl-(2-&gt;1)-]n+1 alpha-D-glucopyranoside = [1-beta-D-fructofuranosyl-(2-&gt;1)-]m alpha-D-glucopyranoside + [1-beta-D-fructofuranosyl-(2-&gt;1)-]n+1 beta-D-fructofuranosyl-(2-&gt;6)-alpha-D-glucopyranoside (m &gt; 0, n &gt;= 0).. Functionally, involved in the synthesis of fructan of the inulin neoseries. Has no 1-FFT activity. The protein is 6(G)-fructosyltransferase (FT1) of Asparagus officinalis (Garden asparagus).